A 503-amino-acid chain; its full sequence is Inosine-5'-monophosphate dehydrogenase (503 aa).

K(+) contacts are provided by glycine 20 and serine 22. CBS domains lie at 103 to 163 (FVVS…ETKV) and 167 to 228 (MTPF…LVDS). 261 to 263 (DSS) is an NAD(+) binding site. Residues aspartate 264, phenylalanine 266, glycine 314, and glycine 316 each coordinate K(+). 312–314 (GIG) serves as a coordination point for NAD(+). Serine 317 contacts IMP. Residue cysteine 319 coordinates K(+). Cysteine 319 acts as the Thioimidate intermediate in catalysis. Residues 358 to 360 (DGG), 381 to 382 (GR), and 405 to 409 (YWGEG) each bind IMP. Residue arginine 418 is the Proton acceptor of the active site. Residue glutamate 431 coordinates IMP. 4 residues coordinate K(+): asparagine 460, glutamate 485, glycine 486, and glycine 487.

It belongs to the IMPDH/GMPR family. Homotetramer. The cofactor is K(+).

The protein resides in the cytoplasm. The enzyme catalyses IMP + NAD(+) + H2O = XMP + NADH + H(+). It participates in purine metabolism; XMP biosynthesis via de novo pathway; XMP from IMP: step 1/1. With respect to regulation, mycophenolic acid (MPA) is a non-competitive inhibitor that prevents formation of the closed enzyme conformation by binding to the same site as the amobile flap. In contrast, mizoribine monophosphate (MZP) is a competitive inhibitor that induces the closed conformation. MPA is a potent inhibitor of mammalian IMPDHs but a poor inhibitor of the bacterial enzymes. MZP is a more potent inhibitor of bacterial IMPDH. In terms of biological role, catalyzes the conversion of inosine 5'-phosphate (IMP) to xanthosine 5'-phosphate (XMP), the first committed and rate-limiting step in the de novo synthesis of guanine nucleotides, and therefore plays an important role in the regulation of cell growth. Could also have a single-stranded nucleic acid-binding activity and could play a role in RNA and/or DNA metabolism. This chain is Inosine-5'-monophosphate dehydrogenase, found in Tritrichomonas foetus (Trichomonas foetus).